We begin with the raw amino-acid sequence, 116 residues long: Large ribosomal subunit protein bL17 (116 aa).

Belongs to the bacterial ribosomal protein bL17 family. As to quaternary structure, part of the 50S ribosomal subunit. Contacts protein L32.

This Prochlorococcus marinus (strain SARG / CCMP1375 / SS120) protein is Large ribosomal subunit protein bL17.